The chain runs to 132 residues: Small ribosomal subunit protein uS8 (132 aa).

This sequence belongs to the universal ribosomal protein uS8 family. As to quaternary structure, part of the 30S ribosomal subunit. Contacts proteins S5 and S12.

Functionally, one of the primary rRNA binding proteins, it binds directly to 16S rRNA central domain where it helps coordinate assembly of the platform of the 30S subunit. This chain is Small ribosomal subunit protein uS8, found in Clostridium beijerinckii (strain ATCC 51743 / NCIMB 8052) (Clostridium acetobutylicum).